Reading from the N-terminus, the 178-residue chain is ATP-dependent protease subunit HslV (178 aa).

T7 is a catalytic residue. The Na(+) site is built by G162, C165, and T168.

It belongs to the peptidase T1B family. HslV subfamily. In terms of assembly, a double ring-shaped homohexamer of HslV is capped on each side by a ring-shaped HslU homohexamer. The assembly of the HslU/HslV complex is dependent on binding of ATP.

The protein resides in the cytoplasm. The catalysed reaction is ATP-dependent cleavage of peptide bonds with broad specificity.. Allosterically activated by HslU binding. In terms of biological role, protease subunit of a proteasome-like degradation complex believed to be a general protein degrading machinery. The protein is ATP-dependent protease subunit HslV of Azoarcus sp. (strain BH72).